The sequence spans 90 residues: MMTRVFLAMFFLLVLTKGWPRLYDGDCTRGPNMHITCFKDQSCGLIVKRNGRLSCTLNCKCRRNESCLPSEEVDWDNRNMKIVICPKPWF.

Residues 1–18 (MMTRVFLAMFFLLVLTKG) form the signal peptide.

Belongs to the E superfamily. Post-translationally, contains 4 disulfide bonds. As to expression, expressed by the venom duct.

Its subcellular location is the secreted. This is Conotoxin Vc22.1 from Conus victoriae (Queen Victoria cone).